A 373-amino-acid chain; its full sequence is Core trichothecene cluster (CTC) protein 14 (373 aa).

Belongs to the TRI14 family.

In terms of biological role, part of the core gene cluster that mediates the biosynthesis of trichothecenes, a very large family of chemically related bicyclic sesquiterpene compounds acting as mycotoxins, including T2-toxin. The biosynthesis of trichothecenes begins with the cyclization of farnesyl diphosphate to trichodiene and is catalyzed by the trichodiene synthase TRI5. Trichodiene undergoes a series of oxygenations catalyzed by the cytochrome P450 monooxygenase TRI4. TRI4 controls the addition of four oxygens at C-2, C-3, C-11, and the C-12, C-13-epoxide to form the intermediate isotrichotriol. Isotrichotriol then undergoes a non-enzymatic isomerization and cyclization to form isotrichodermol. During this process, the oxygen at the C-2 position becomes the pyran ring oxygen and the hydroxyl group at C-11 is lost. More complex type A trichothecenes are built by modifying isotrichodermol through a series of paired hydroxylation and acetylation or acylation steps. Isotrichodermol is converted to isotrichodermin by the acetyltransferase TRI101. TRI101 encodes a C-3 transacetylase that acts as a self-protection or resistance factor during biosynthesis and that the presence of a free C-3 hydroxyl group is a key component of Fusarium trichothecene phytotoxicity. A second hydroxyl group is added to C-15 by the trichothecene C-15 hydroxylase TRI11, producing 15-decalonectrin, which is then acetylated by TRI3, producing calonectrin. A third hydroxyl group is added at C-4 by the cytochrome P450 monooxygenase TRI13, converting calonectrin to 3,15-diacetoxyspirpenol, which is subsequently acetylated bythe acetyltransferase TRI7. A fourth hydroxyl group is added to C-8 by the cytochrome P450 monooxygenase TRI1, followed by the addition of an isovaleryl moiety by TRI16. Finally, the acetyl group is removed from the C-3 position by the trichothecene C-3 esterase TRI8 to produce T-2 toxin. The chain is Core trichothecene cluster (CTC) protein 14 from Fusarium sporotrichioides.